Reading from the N-terminus, the 132-residue chain is Small ribosomal subunit protein bS6 (132 aa).

The segment at 96–132 (HAEGPSIQMQKRDERERGDRGDRSDRGDRGDRGGFRR) is disordered. Residues 105-132 (QKRDERERGDRGDRSDRGDRGDRGGFRR) are compositionally biased toward basic and acidic residues.

The protein belongs to the bacterial ribosomal protein bS6 family.

Binds together with bS18 to 16S ribosomal RNA. The protein is Small ribosomal subunit protein bS6 of Cereibacter sphaeroides (strain ATCC 17023 / DSM 158 / JCM 6121 / CCUG 31486 / LMG 2827 / NBRC 12203 / NCIMB 8253 / ATH 2.4.1.) (Rhodobacter sphaeroides).